The chain runs to 437 residues: Replication factor C large subunit (437 aa).

48–55 (GPPGVGKT) contributes to the ATP binding site. The tract at residues 410–437 (TQASKPTSEEKAEKSKKYYPKRSSSRKT) is disordered. Basic and acidic residues predominate over residues 416-425 (TSEEKAEKSK). Over residues 426–437 (KYYPKRSSSRKT) the composition is skewed to basic residues.

This sequence belongs to the activator 1 small subunits family. RfcL subfamily. As to quaternary structure, heteromultimer composed of small subunits (RfcS) and large subunits (RfcL).

In terms of biological role, part of the RFC clamp loader complex which loads the PCNA sliding clamp onto DNA. The protein is Replication factor C large subunit of Sulfolobus acidocaldarius (strain ATCC 33909 / DSM 639 / JCM 8929 / NBRC 15157 / NCIMB 11770).